Consider the following 232-residue polypeptide: Exosome complex component RRP40 (232 aa).

Belongs to the RRP40 family. Component of the RNA exosome complex. Specifically part of the catalytically inactive RNA exosome core complex.

The protein localises to the cytoplasm. It is found in the nucleus. The protein resides in the nucleolus. Functionally, non-catalytic component of the RNA exosome complex which has 3'-&gt;5' exoribonuclease activity and participates in a multitude of cellular RNA processing and degradation events. In the nucleus, the RNA exosome complex is involved in proper maturation of stable RNA species such as rRNA, snRNA and snoRNA, in the elimination of RNA processing by-products and non-coding 'pervasive' transcripts such as antisense RNA species, and of mRNAs with processing defects, thereby limiting or excluding their export to the cytoplasm. In the cytoplasm, the RNA exosome complex is involved in general mRNA turnover and specifically degrades inherently unstable mRNAs containing AU-rich elements (AREs) within their 3' untranslated regions, and in RNA surveillance pathways, preventing translation of aberrant mRNAs. The catalytic inactive RNA exosome core complex of 9 subunits is proposed to play a pivotal role in the binding and presentation of RNA for ribonucleolysis, and to serve as a scaffold for the association with catalytic subunits and accessory proteins or complexes. Required generally for normal embryonic and neuronal development. Also plays a critical role in the maintenance of neuronal function in mature flies by controlling the levels of specific mRNAs such as the synaptic regulator Arc1. The sequence is that of Exosome complex component RRP40 from Drosophila melanogaster (Fruit fly).